The sequence spans 231 residues: Nitrate reductase [NAD(P)H] (231 aa).

The FAD-binding FR-type domain occupies 1–85; that stretch reads PQKLGLPVGR…KGPHRHIEYT (85 aa). FAD-binding positions include 25 to 28, 42 to 46, Phe47, 59 to 61, and Thr112; these read RAYT, LIKIY, and LMS.

It belongs to the nitrate reductase family. As to quaternary structure, homodimer. It depends on FAD as a cofactor. Heme serves as cofactor. Requires Mo-molybdopterin as cofactor.

The catalysed reaction is nitrite + NAD(+) + H2O = nitrate + NADH + H(+). It carries out the reaction nitrite + NADP(+) + H2O = nitrate + NADPH + H(+). Nitrate reductase is a key enzyme involved in the first step of nitrate assimilation in plants, fungi and bacteria. This chain is Nitrate reductase [NAD(P)H] (NAR), found in Zea mays (Maize).